Reading from the N-terminus, the 389-residue chain is Lipid-A-disaccharide synthase (389 aa).

This sequence belongs to the LpxB family.

The enzyme catalyses a lipid X + a UDP-2-N,3-O-bis[(3R)-3-hydroxyacyl]-alpha-D-glucosamine = a lipid A disaccharide + UDP + H(+). It functions in the pathway bacterial outer membrane biogenesis; LPS lipid A biosynthesis. Functionally, condensation of UDP-2,3-diacylglucosamine and 2,3-diacylglucosamine-1-phosphate to form lipid A disaccharide, a precursor of lipid A, a phosphorylated glycolipid that anchors the lipopolysaccharide to the outer membrane of the cell. In Burkholderia multivorans (strain ATCC 17616 / 249), this protein is Lipid-A-disaccharide synthase.